Consider the following 85-residue polypeptide: uncharacterized protein (85 aa).

This is an uncharacterized protein from Bacillus subtilis (strain 168).